The sequence spans 283 residues: Protein FDD123 (283 aa).

The next 7 helical transmembrane spans lie at tryptophan 24–phenylalanine 44, leucine 52–alanine 72, tyrosine 97–leucine 117, isoleucine 122–valine 142, tryptophan 148–histidine 168, isoleucine 185–alanine 205, and methionine 217–tryptophan 237.

This sequence belongs to the archaeal/bacterial/fungal opsin family.

The protein localises to the membrane. This chain is Protein FDD123 (FDD123), found in Trametes versicolor (White-rot fungus).